The chain runs to 300 residues: tRNA pseudouridine synthase B (300 aa).

Catalysis depends on D38, which acts as the Nucleophile.

The protein belongs to the pseudouridine synthase TruB family. Type 1 subfamily.

It carries out the reaction uridine(55) in tRNA = pseudouridine(55) in tRNA. Functionally, responsible for synthesis of pseudouridine from uracil-55 in the psi GC loop of transfer RNAs. In Dehalococcoides mccartyi (strain ATCC BAA-2100 / JCM 16839 / KCTC 5957 / BAV1), this protein is tRNA pseudouridine synthase B.